The primary structure comprises 276 residues: Diaminopimelate epimerase (276 aa).

Substrate contacts are provided by Asn-13, Gln-46, and Asn-66. Residue Cys-75 is the Proton donor of the active site. Residues 76–77, Asn-159, Asn-192, and 210–211 each bind substrate; these read GN and ER. Cys-219 functions as the Proton acceptor in the catalytic mechanism. 220–221 provides a ligand contact to substrate; sequence GT.

This sequence belongs to the diaminopimelate epimerase family. As to quaternary structure, homodimer.

Its subcellular location is the cytoplasm. It carries out the reaction (2S,6S)-2,6-diaminopimelate = meso-2,6-diaminopimelate. It participates in amino-acid biosynthesis; L-lysine biosynthesis via DAP pathway; DL-2,6-diaminopimelate from LL-2,6-diaminopimelate: step 1/1. Functionally, catalyzes the stereoinversion of LL-2,6-diaminopimelate (L,L-DAP) to meso-diaminopimelate (meso-DAP), a precursor of L-lysine and an essential component of the bacterial peptidoglycan. The polypeptide is Diaminopimelate epimerase (Chromobacterium violaceum (strain ATCC 12472 / DSM 30191 / JCM 1249 / CCUG 213 / NBRC 12614 / NCIMB 9131 / NCTC 9757 / MK)).